The chain runs to 309 residues: Pantothenate kinase (309 aa).

92–99 (GSVAVGKT) contributes to the ATP binding site.

This sequence belongs to the prokaryotic pantothenate kinase family.

Its subcellular location is the cytoplasm. The catalysed reaction is (R)-pantothenate + ATP = (R)-4'-phosphopantothenate + ADP + H(+). The protein operates within cofactor biosynthesis; coenzyme A biosynthesis; CoA from (R)-pantothenate: step 1/5. In Lactiplantibacillus plantarum (strain ATCC BAA-793 / NCIMB 8826 / WCFS1) (Lactobacillus plantarum), this protein is Pantothenate kinase (coaA).